The primary structure comprises 238 residues: Dolichyldiphosphatase 1 (238 aa).

A run of 4 helical transmembrane segments spans residues L33–F53, P100–L120, F130–V150, and W162–F182.

The protein belongs to the dolichyldiphosphatase family.

The protein resides in the endoplasmic reticulum membrane. The enzyme catalyses a di-trans,poly-cis-dolichyl diphosphate + H2O = a di-trans,poly-cis-dolichyl phosphate + phosphate + H(+). It participates in protein modification; protein glycosylation. In terms of biological role, required for efficient N-glycosylation. Necessary for maintaining optimal levels of dolichol-linked oligosaccharides. Hydrolyzes dolichyl pyrophosphate at a very high rate and dolichyl monophosphate at a much lower rate. Does not act on phosphatidate. The polypeptide is Dolichyldiphosphatase 1 (DOLPP1) (Callithrix jacchus (White-tufted-ear marmoset)).